The following is a 239-amino-acid chain: MGKPKFYDFCVHAVPDGENTVDQLSALARHLGYSGIALTNHSDKLPQSQPVLPSTNEFEVFKGIELVEENPSKLHGLIGKFRKSVDVLIVHGGSENVNRAALENPRVDILNHPAFAKSSGLNQVLAKSAAENDVAISLIIRPLLHSRGPRRVRLLSNLRANLDLARKYDVSLVLSSGAMSCFDLRSPMETLALAEVCGLEEDEALEAITVVPERIISRNRPGPGHVREGIEVLEEGDYS.

It belongs to the eukaryotic/archaeal RNase P protein component 3 family. In terms of assembly, consists of a catalytic RNA component and at least 4-5 protein subunits.

It localises to the cytoplasm. The catalysed reaction is Endonucleolytic cleavage of RNA, removing 5'-extranucleotides from tRNA precursor.. In terms of biological role, part of ribonuclease P, a protein complex that generates mature tRNA molecules by cleaving their 5'-ends. The polypeptide is Ribonuclease P protein component 3 (Methanosarcina barkeri (strain Fusaro / DSM 804)).